Reading from the N-terminus, the 732-residue chain is Prolyl tripeptidyl peptidase (732 aa).

The first 24 residues, Met-1–Ala-24, serve as a signal peptide directing secretion. Residues Ser-603, Asp-678, and His-710 each act as charge relay system in the active site.

It belongs to the peptidase S9B family.

The catalysed reaction is Hydrolysis of Xaa-Xaa-Pro-|-Yaa- releasing the N-terminal tripeptide of a peptide with Pro as the third residue (position P1) and where Yaa is not proline.. Serine proteinase. Releases tripeptides from the free amino terminus of proteins. Has a requirement for Pro in the P1 position, but is inactivated by Pro in the P1' position. This chain is Prolyl tripeptidyl peptidase, found in Porphyromonas gingivalis (strain ATCC 33277 / DSM 20709 / CIP 103683 / JCM 12257 / NCTC 11834 / 2561).